Here is a 157-residue protein sequence, read N- to C-terminus: Endoribonuclease YbeY (157 aa).

Positions 113, 117, and 123 each coordinate Zn(2+).

This sequence belongs to the endoribonuclease YbeY family. The cofactor is Zn(2+).

The protein resides in the cytoplasm. In terms of biological role, single strand-specific metallo-endoribonuclease involved in late-stage 70S ribosome quality control and in maturation of the 3' terminus of the 16S rRNA. This is Endoribonuclease YbeY from Ehrlichia ruminantium (strain Welgevonden).